We begin with the raw amino-acid sequence, 168 residues long: Transcription antitermination protein NusB (168 aa).

The protein belongs to the NusB family.

In terms of biological role, involved in transcription antitermination. Required for transcription of ribosomal RNA (rRNA) genes. Binds specifically to the boxA antiterminator sequence of the ribosomal RNA (rrn) operons. This is Transcription antitermination protein NusB from Chlamydia trachomatis serovar D (strain ATCC VR-885 / DSM 19411 / UW-3/Cx).